We begin with the raw amino-acid sequence, 114 residues long: MHELSIAESIIELLEEHAVTHKFKKVTKIILEIGVLAGIEKSALFFCFDVAAQNSLAEGAELLIEDKLAQGVCQNCHLQVTTTGWYEPCPYCGQLLINITEGEQMKIKSLEVEN.

Histidine 2 is a binding site for Ni(2+). Zn(2+)-binding residues include cysteine 73, cysteine 76, cysteine 89, and cysteine 92.

This sequence belongs to the HypA/HybF family.

Involved in the maturation of [NiFe] hydrogenases. Required for nickel insertion into the metal center of the hydrogenase. The protein is Hydrogenase maturation factor HypA of Psychromonas ingrahamii (strain DSM 17664 / CCUG 51855 / 37).